Consider the following 148-residue polypeptide: Endoribonuclease YbeY (148 aa).

Residues His-113, His-117, and His-123 each contribute to the Zn(2+) site.

Belongs to the endoribonuclease YbeY family. It depends on Zn(2+) as a cofactor.

The protein localises to the cytoplasm. In terms of biological role, single strand-specific metallo-endoribonuclease involved in late-stage 70S ribosome quality control and in maturation of the 3' terminus of the 16S rRNA. In Borrelia duttonii (strain Ly), this protein is Endoribonuclease YbeY.